A 94-amino-acid polypeptide reads, in one-letter code: ATP synthase F(0) complex subunit f, mitochondrial (94 aa).

N-acetylalanine is present on A2. The residue at position 3 (S3) is a Phosphoserine. K22 bears the N6-acetyllysine mark. The helical transmembrane segment at M68–L85 threads the bilayer.

The protein belongs to the ATPase F chain family. As to quaternary structure, component of the ATP synthase complex composed at least of ATP5F1A/subunit alpha, ATP5F1B/subunit beta, ATP5MC1/subunit c (homooctomer), MT-ATP6/subunit a, MT-ATP8/subunit 8, ATP5ME/subunit e, ATP5MF/subunit f, ATP5MG/subunit g, ATP5MK/subunit k, ATP5MJ/subunit j, ATP5F1C/subunit gamma, ATP5F1D/subunit delta, ATP5F1E/subunit epsilon, ATP5PF/subunit F6, ATP5PB/subunit b, ATP5PD/subunit d, ATP5PO/subunit OSCP. ATP synthase complex consists of a soluble F(1) head domain (subunits alpha(3) and beta(3)) - the catalytic core - and a membrane F(0) domain - the membrane proton channel (subunits c, a, 8, e, f, g, k and j). These two domains are linked by a central stalk (subunits gamma, delta, and epsilon) rotating inside the F1 region and a stationary peripheral stalk (subunits F6, b, d, and OSCP).

The protein localises to the mitochondrion. Its subcellular location is the mitochondrion inner membrane. Its function is as follows. Subunit f, of the mitochondrial membrane ATP synthase complex (F(1)F(0) ATP synthase or Complex V) that produces ATP from ADP in the presence of a proton gradient across the membrane which is generated by electron transport complexes of the respiratory chain. ATP synthase complex consist of a soluble F(1) head domain - the catalytic core - and a membrane F(1) domain - the membrane proton channel. These two domains are linked by a central stalk rotating inside the F(1) region and a stationary peripheral stalk. During catalysis, ATP synthesis in the catalytic domain of F(1) is coupled via a rotary mechanism of the central stalk subunits to proton translocation. In vivo, can only synthesize ATP although its ATP hydrolase activity can be activated artificially in vitro. Part of the complex F(0) domain. The sequence is that of ATP synthase F(0) complex subunit f, mitochondrial from Homo sapiens (Human).